Consider the following 401-residue polypeptide: Subtilisin-like protease 7 (401 aa).

The first 20 residues, 1–20, serve as a signal peptide directing secretion; sequence MGFITKAIPLALAAASVING. The propeptide occupies 21-119; the sequence is AEILETRAGV…IERDARVQIN (99 aa). An Inhibitor I9 domain is found at 36–118; it reads KYIVVMNDGM…YIERDARVQI (83 aa). A glycan (N-linked (GlcNAc...) asparagine) is linked at Asn58. Positions 129–401 constitute a Peptidase S8 domain; that stretch reads SWGLARVGSR…SKLINNGSGM (273 aa). Active-site charge relay system residues include Asp161 and His193. Asn223 and Asn253 each carry an N-linked (GlcNAc...) asparagine glycan. Ser347 functions as the Charge relay system in the catalytic mechanism. Asn397 carries an N-linked (GlcNAc...) asparagine glycan.

It belongs to the peptidase S8 family.

Its subcellular location is the secreted. In terms of biological role, secreted subtilisin-like serine protease with keratinolytic activity that contributes to pathogenicity. This Trichophyton tonsurans (Scalp ringworm fungus) protein is Subtilisin-like protease 7 (SUB7).